The primary structure comprises 221 residues: 7-cyano-7-deazaguanine synthase (221 aa).

Residue 7–17 participates in ATP binding; it reads LSGGLDSAVSL. Zn(2+) is bound by residues Cys-192, Cys-200, Cys-203, and Cys-206.

Belongs to the QueC family. Homodimer. Zn(2+) is required as a cofactor.

It catalyses the reaction 7-carboxy-7-deazaguanine + NH4(+) + ATP = 7-cyano-7-deazaguanine + ADP + phosphate + H2O + H(+). It functions in the pathway purine metabolism; 7-cyano-7-deazaguanine biosynthesis. Functionally, catalyzes the ATP-dependent conversion of 7-carboxy-7-deazaguanine (CDG) to 7-cyano-7-deazaguanine (preQ(0)). This is 7-cyano-7-deazaguanine synthase from Pelotomaculum thermopropionicum (strain DSM 13744 / JCM 10971 / SI).